The primary structure comprises 102 residues: Protein isd11 (102 aa).

It belongs to the complex I LYR family.

It localises to the mitochondrion. Required for mitochondrial iron-sulfur (Fe-S) protein biosynthesis. In Schizosaccharomyces pombe (strain 972 / ATCC 24843) (Fission yeast), this protein is Protein isd11 (isd11).